Reading from the N-terminus, the 249-residue chain is 3-deoxy-manno-octulosonate cytidylyltransferase (249 aa).

It belongs to the KdsB family.

It is found in the cytoplasm. The catalysed reaction is 3-deoxy-alpha-D-manno-oct-2-ulosonate + CTP = CMP-3-deoxy-beta-D-manno-octulosonate + diphosphate. It participates in nucleotide-sugar biosynthesis; CMP-3-deoxy-D-manno-octulosonate biosynthesis; CMP-3-deoxy-D-manno-octulosonate from 3-deoxy-D-manno-octulosonate and CTP: step 1/1. Its pathway is bacterial outer membrane biogenesis; lipopolysaccharide biosynthesis. Activates KDO (a required 8-carbon sugar) for incorporation into bacterial lipopolysaccharide in Gram-negative bacteria. The polypeptide is 3-deoxy-manno-octulosonate cytidylyltransferase (Brucella anthropi (strain ATCC 49188 / DSM 6882 / CCUG 24695 / JCM 21032 / LMG 3331 / NBRC 15819 / NCTC 12168 / Alc 37) (Ochrobactrum anthropi)).